The following is a 203-amino-acid chain: Urease accessory protein UreG (203 aa).

Residue 10–17 coordinates GTP; that stretch reads GPVGAGKT.

It belongs to the SIMIBI class G3E GTPase family. UreG subfamily. Homodimer. UreD, UreF and UreG form a complex that acts as a GTP-hydrolysis-dependent molecular chaperone, activating the urease apoprotein by helping to assemble the nickel containing metallocenter of UreC. The UreE protein probably delivers the nickel.

Its subcellular location is the cytoplasm. Functionally, facilitates the functional incorporation of the urease nickel metallocenter. This process requires GTP hydrolysis, probably effectuated by UreG. The sequence is that of Urease accessory protein UreG from Kocuria rhizophila (strain ATCC 9341 / DSM 348 / NBRC 103217 / DC2201).